The following is a 954-amino-acid chain: Bifunctional glutamine synthetase adenylyltransferase/adenylyl-removing enzyme (954 aa).

Residues 1–452 (MAVQKDSNKS…HFKATVGGEE (452 aa)) form an adenylyl removase region. Residues 458-954 (EHWTAQLWNV…ILAIYQAILE (497 aa)) form an adenylyl transferase region.

This sequence belongs to the GlnE family. Mg(2+) serves as cofactor.

It carries out the reaction [glutamine synthetase]-O(4)-(5'-adenylyl)-L-tyrosine + phosphate = [glutamine synthetase]-L-tyrosine + ADP. The catalysed reaction is [glutamine synthetase]-L-tyrosine + ATP = [glutamine synthetase]-O(4)-(5'-adenylyl)-L-tyrosine + diphosphate. In terms of biological role, involved in the regulation of glutamine synthetase GlnA, a key enzyme in the process to assimilate ammonia. When cellular nitrogen levels are high, the C-terminal adenylyl transferase (AT) inactivates GlnA by covalent transfer of an adenylyl group from ATP to specific tyrosine residue of GlnA, thus reducing its activity. Conversely, when nitrogen levels are low, the N-terminal adenylyl removase (AR) activates GlnA by removing the adenylyl group by phosphorolysis, increasing its activity. The regulatory region of GlnE binds the signal transduction protein PII (GlnB) which indicates the nitrogen status of the cell. The chain is Bifunctional glutamine synthetase adenylyltransferase/adenylyl-removing enzyme from Shewanella oneidensis (strain ATCC 700550 / JCM 31522 / CIP 106686 / LMG 19005 / NCIMB 14063 / MR-1).